The primary structure comprises 129 residues: ATP synthase epsilon chain (129 aa).

The protein belongs to the ATPase epsilon chain family. F-type ATPases have 2 components, CF(1) - the catalytic core - and CF(0) - the membrane proton channel. CF(1) has five subunits: alpha(3), beta(3), gamma(1), delta(1), epsilon(1). CF(0) has three main subunits: a, b and c.

The protein localises to the cell inner membrane. Its function is as follows. Produces ATP from ADP in the presence of a proton gradient across the membrane. This is ATP synthase epsilon chain from Campylobacter jejuni subsp. doylei (strain ATCC BAA-1458 / RM4099 / 269.97).